We begin with the raw amino-acid sequence, 173 residues long: Crossover junction endodeoxyribonuclease RuvC (173 aa).

Residues Asp-8, Glu-67, and Asp-139 contribute to the active site. Residues Asp-8, Glu-67, and Asp-139 each contribute to the Mg(2+) site.

The protein belongs to the RuvC family. As to quaternary structure, homodimer which binds Holliday junction (HJ) DNA. The HJ becomes 2-fold symmetrical on binding to RuvC with unstacked arms; it has a different conformation from HJ DNA in complex with RuvA. In the full resolvosome a probable DNA-RuvA(4)-RuvB(12)-RuvC(2) complex forms which resolves the HJ. Mg(2+) is required as a cofactor.

It is found in the cytoplasm. The catalysed reaction is Endonucleolytic cleavage at a junction such as a reciprocal single-stranded crossover between two homologous DNA duplexes (Holliday junction).. In terms of biological role, the RuvA-RuvB-RuvC complex processes Holliday junction (HJ) DNA during genetic recombination and DNA repair. Endonuclease that resolves HJ intermediates. Cleaves cruciform DNA by making single-stranded nicks across the HJ at symmetrical positions within the homologous arms, yielding a 5'-phosphate and a 3'-hydroxyl group; requires a central core of homology in the junction. The consensus cleavage sequence is 5'-(A/T)TT(C/G)-3'. Cleavage occurs on the 3'-side of the TT dinucleotide at the point of strand exchange. HJ branch migration catalyzed by RuvA-RuvB allows RuvC to scan DNA until it finds its consensus sequence, where it cleaves and resolves the cruciform DNA. The chain is Crossover junction endodeoxyribonuclease RuvC from Pectobacterium carotovorum subsp. carotovorum (strain PC1).